Here is a 401-residue protein sequence, read N- to C-terminus: Probable trafficking protein particle complex subunit 13 homolog (401 aa).

This sequence belongs to the TRAPPC13 family.

The sequence is that of Probable trafficking protein particle complex subunit 13 homolog from Caenorhabditis briggsae.